The sequence spans 438 residues: Plasmalemma vesicle-associated protein (438 aa).

Residues 1–26 are Cytoplasmic-facing; the sequence is MGLSMDRSPYARTGDQQRGCWYYLRY. Residues 27 to 47 traverse the membrane as a helical; Signal-anchor for type II membrane protein segment; sequence FFLFVSLIQFLIILGLVLFMI. Over 48–438 the chain is Extracellular; the sequence is YGNVHATTES…VVNPAAQPSG (391 aa). 4 N-linked (GlcNAc...) asparagine glycosylation sites follow: Asn82, Asn88, Asn112, and Asn150. Coiled coils occupy residues 140–160, 189–224, and 281–383; these read KQCQ…LFKL, KRQT…QSLC, and EELA…ISAL. A disordered region spans residues 391 to 413; the sequence is SLPAVPPRVSGPPPNPPPIDPAS. Positions 394 to 410 are enriched in pro residues; sequence AVPPRVSGPPPNPPPID.

Homodimer. As to expression, expressed in lung, kidney, spleen, heart, muscle, eye, pancreas, thyroid, thymus, submaxillary gland, prostate, epididymis, uterus and liver.

It is found in the cell membrane. It localises to the membrane. Its subcellular location is the caveola. The protein localises to the cytoplasm. The protein resides in the perinuclear region. In terms of biological role, endothelial cell-specific membrane protein involved in the formation of the diaphragms that bridge endothelial fenestrae. It is also required for the formation of stomata of caveolae and transendothelial channels. Functions in microvascular permeability, endothelial fenestrae contributing to the passage of water and solutes and regulating transcellular versus paracellular flow in different organs. Plays a specific role in embryonic development. In Mus musculus (Mouse), this protein is Plasmalemma vesicle-associated protein (Plvap).